A 534-amino-acid polypeptide reads, in one-letter code: CTP synthase (534 aa).

Residues 1-266 (MKTKFLFITG…DERIIDYLNI (266 aa)) are amidoligase domain. Position 14 (serine 14) interacts with CTP. UTP is bound at residue serine 14. ATP is bound by residues 15 to 20 (SLGKGL) and aspartate 72. Mg(2+)-binding residues include aspartate 72 and glutamate 140. Residues 147–149 (DIE), 187–192 (KTKPTQ), and lysine 223 each bind CTP. Residues 187–192 (KTKPTQ) and lysine 223 contribute to the UTP site. 239–241 (RDV) is a binding site for ATP. One can recognise a Glutamine amidotransferase type-1 domain in the interval 291–533 (TIAIVGKYVE…VGASLKHHGE (243 aa)). L-glutamine is bound at residue glycine 353. Cysteine 380 acts as the Nucleophile; for glutamine hydrolysis in catalysis. Residues 381–384 (LGMQ), glutamate 404, and arginine 461 each bind L-glutamine. Residues histidine 506 and glutamate 508 contribute to the active site.

It belongs to the CTP synthase family. Homotetramer.

It catalyses the reaction UTP + L-glutamine + ATP + H2O = CTP + L-glutamate + ADP + phosphate + 2 H(+). The enzyme catalyses L-glutamine + H2O = L-glutamate + NH4(+). The catalysed reaction is UTP + NH4(+) + ATP = CTP + ADP + phosphate + 2 H(+). Its pathway is pyrimidine metabolism; CTP biosynthesis via de novo pathway; CTP from UDP: step 2/2. Allosterically activated by GTP, when glutamine is the substrate; GTP has no effect on the reaction when ammonia is the substrate. The allosteric effector GTP functions by stabilizing the protein conformation that binds the tetrahedral intermediate(s) formed during glutamine hydrolysis. Inhibited by the product CTP, via allosteric rather than competitive inhibition. In terms of biological role, catalyzes the ATP-dependent amination of UTP to CTP with either L-glutamine or ammonia as the source of nitrogen. Regulates intracellular CTP levels through interactions with the four ribonucleotide triphosphates. This chain is CTP synthase, found in Syntrophotalea carbinolica (strain DSM 2380 / NBRC 103641 / GraBd1) (Pelobacter carbinolicus).